The sequence spans 156 residues: Putative NrdI-like protein (156 aa).

Belongs to the NrdI family.

The chain is Putative NrdI-like protein from Streptococcus pneumoniae serotype 4 (strain ATCC BAA-334 / TIGR4).